Here is a 433-residue protein sequence, read N- to C-terminus: Actin-related protein 4 (433 aa).

The segment at 289 to 317 is disordered; that stretch reads GSDEEMNEEPSKPIEQTENNEVSQQDSSV. Over residues 302–317 the composition is skewed to polar residues; that stretch reads IEQTENNEVSQQDSSV.

This sequence belongs to the actin family. ARP4 subfamily. Component of the NuA4 histone acetyltransferase complex, of the INO80 chromatin remodeling complex, and of the SWR1 chromatin remodeling complex.

The protein localises to the nucleus. Its function is as follows. Chromatin interaction component of the NuA4 histone acetyltransferase complex which is involved in transcriptional activation of selected genes principally by acetylation of nucleosomal histone H4 and H2A. The NuA4 complex is also involved in DNA repair. Is required for NuA4 complex integrity. Component of the SWR1 complex which mediates the ATP-dependent exchange of histone H2A for the H2A variant HZT1 leading to transcriptional regulation of selected genes by chromatin remodeling. Component of the INO80 complex which remodels chromatin by shifting nucleosomes and is involved in DNA repair. This is Actin-related protein 4 (alp5) from Schizosaccharomyces pombe (strain 972 / ATCC 24843) (Fission yeast).